The primary structure comprises 967 residues: Translation initiation factor IF-2 (967 aa).

The segment at 34–363 is disordered; it reads ASSTVEPPVA…APAVGGVSVP (330 aa). Low complexity-rich tracts occupy residues 51 to 96 and 103 to 154; these read PAGG…GNAA and ASEA…TPGP. Residues 184–196 are compositionally biased toward gly residues; it reads RSEGGAQRGGPRP. Positions 197–206 are enriched in low complexity; the sequence is GGQQRSGKPG. Positions 300–333 are enriched in gly residues; sequence PRRGGGPGGGPGGGGGFRGRGGRGGTQGAFGRGG. A compositionally biased stretch (basic residues) spans 334 to 345; that stretch reads ARGKHRKSKRAK. In terms of domain architecture, tr-type G spans 460–632; the sequence is PRPPVVTVMG…IVLTADGALE (173 aa). The tract at residues 469–476 is G1; that stretch reads GHVDHGKT. GTP is bound at residue 469 to 476; the sequence is GHVDHGKT. The interval 494 to 498 is G2; the sequence is GITQH. The segment at 519–522 is G3; it reads DTPG. Residues 519–523 and 573–576 contribute to the GTP site; these read DTPGH and NKVD. Positions 573-576 are G4; it reads NKVD. Positions 609–611 are G5; that stretch reads SAR.

This sequence belongs to the TRAFAC class translation factor GTPase superfamily. Classic translation factor GTPase family. IF-2 subfamily.

The protein resides in the cytoplasm. In terms of biological role, one of the essential components for the initiation of protein synthesis. Protects formylmethionyl-tRNA from spontaneous hydrolysis and promotes its binding to the 30S ribosomal subunits. Also involved in the hydrolysis of GTP during the formation of the 70S ribosomal complex. The protein is Translation initiation factor IF-2 of Kocuria rhizophila (strain ATCC 9341 / DSM 348 / NBRC 103217 / DC2201).